The following is a 282-amino-acid chain: 2,3,4,5-tetrahydropyridine-2,6-dicarboxylate N-succinyltransferase (282 aa).

Residues Arg-109 and Asp-146 each coordinate substrate.

It belongs to the transferase hexapeptide repeat family. Homotrimer.

It is found in the cytoplasm. The catalysed reaction is (S)-2,3,4,5-tetrahydrodipicolinate + succinyl-CoA + H2O = (S)-2-succinylamino-6-oxoheptanedioate + CoA. The protein operates within amino-acid biosynthesis; L-lysine biosynthesis via DAP pathway; LL-2,6-diaminopimelate from (S)-tetrahydrodipicolinate (succinylase route): step 1/3. The sequence is that of 2,3,4,5-tetrahydropyridine-2,6-dicarboxylate N-succinyltransferase from Bartonella bacilliformis (strain ATCC 35685 / KC583 / Herrer 020/F12,63).